The chain runs to 311 residues: Urease accessory protein UreD (311 aa).

This sequence belongs to the UreD family. UreD, UreF and UreG form a complex that acts as a GTP-hydrolysis-dependent molecular chaperone, activating the urease apoprotein by helping to assemble the nickel containing metallocenter of UreC. The UreE protein probably delivers the nickel.

The protein resides in the cytoplasm. Functionally, required for maturation of urease via the functional incorporation of the urease nickel metallocenter. This Synechococcus sp. (strain CC9902) protein is Urease accessory protein UreD.